A 30-amino-acid chain; its full sequence is Cycloviolacin-H4 (30 aa).

Positions 1–30 (GIPCAESCVWIPCTVTALLGCSCSNNVCYN) form a cross-link, cyclopeptide (Gly-Asn). 3 disulfides stabilise this stretch: Cys4–Cys21, Cys8–Cys23, and Cys13–Cys28.

In terms of processing, this is a cyclic peptide.

In terms of biological role, probably participates in a plant defense mechanism. Has potent hemolytic activity. The polypeptide is Cycloviolacin-H4 (Viola hederacea (Australian violet)).